A 191-amino-acid polypeptide reads, in one-letter code: Classical arabinogalactan protein 9 (191 aa).

Residues 1–20 form the signal peptide; sequence MARSFAIAVICIVLIAGVTG. The segment at 20–172 is disordered; the sequence is GQAPTSPPTA…SPTDVNDQNG (153 aa). Pyrrolidone carboxylic acid is present on Gln-21. A 4-hydroxyproline mark is found at Pro-23, Pro-26, Pro-27, Pro-31, and Pro-33. Pro residues predominate over residues 24-146; sequence TSPPTATPAP…PSPSSSPPLP (123 aa). Pro-26, Pro-27, Pro-31, and Pro-33 each carry an O-linked (Ara...) hydroxyproline glycan. Polar residues predominate over residues 155 to 172; the sequence is TDSISPAPSPTDVNDQNG. Gly-172 carries the GPI-anchor amidated glycine lipid modification. A propeptide spans 173-191 (removed in mature form); the sequence is ASKMVSSLVFGSVLVWFMI.

Belongs to the classical AGP family. In terms of processing, O-glycosylated on hydroxyprolines; noncontiguous hydroxylproline residues are glycosylated with arabinogalactan. Predominantly expressed in flowers and at a lower level in leaves and siliques.

The protein localises to the cell membrane. Functionally, proteoglycan that seems to be implicated in diverse developmental roles such as differentiation, cell-cell recognition, embryogenesis and programmed cell death. In Arabidopsis thaliana (Mouse-ear cress), this protein is Classical arabinogalactan protein 9 (AGP9).